The following is a 377-amino-acid chain: Flagellin D (377 aa).

Residues 104-128 (NSKADRVAIQEEVTALNDELNRIAE) are a coiled coil.

Belongs to the bacterial flagellin family. As to quaternary structure, heteromer of multiple flagellin subunits including FlaA, FlaB, FlaC, FlaD and possibly FlaE.

It is found in the secreted. The protein localises to the bacterial flagellum. Functionally, flagellin is the subunit protein which polymerizes to form the filaments of bacterial flagella. FlaD is not essential for flagellar synthesis and motility. May have a role in virulence unrelated to motility. This is Flagellin D (flaD) from Vibrio anguillarum (Listonella anguillarum).